Here is a 441-residue protein sequence, read N- to C-terminus: ATP-dependent protease ATPase subunit HslU (441 aa).

Residues I18, 60 to 65, D254, E319, and R391 contribute to the ATP site; that span reads GVGKTE.

It belongs to the ClpX chaperone family. HslU subfamily. As to quaternary structure, a double ring-shaped homohexamer of HslV is capped on each side by a ring-shaped HslU homohexamer. The assembly of the HslU/HslV complex is dependent on binding of ATP.

It localises to the cytoplasm. Its function is as follows. ATPase subunit of a proteasome-like degradation complex; this subunit has chaperone activity. The binding of ATP and its subsequent hydrolysis by HslU are essential for unfolding of protein substrates subsequently hydrolyzed by HslV. HslU recognizes the N-terminal part of its protein substrates and unfolds these before they are guided to HslV for hydrolysis. This chain is ATP-dependent protease ATPase subunit HslU, found in Actinobacillus succinogenes (strain ATCC 55618 / DSM 22257 / CCUG 43843 / 130Z).